A 197-amino-acid chain; its full sequence is Xanthine phosphoribosyltransferase (197 aa).

Xanthine contacts are provided by L20 and N27. Position 128–132 (128–132) interacts with 5-phospho-alpha-D-ribose 1-diphosphate; sequence ANGQA. Position 156 (K156) interacts with xanthine.

The protein belongs to the purine/pyrimidine phosphoribosyltransferase family. Xpt subfamily. In terms of assembly, homodimer.

It is found in the cytoplasm. The enzyme catalyses XMP + diphosphate = xanthine + 5-phospho-alpha-D-ribose 1-diphosphate. It functions in the pathway purine metabolism; XMP biosynthesis via salvage pathway; XMP from xanthine: step 1/1. Its function is as follows. Converts the preformed base xanthine, a product of nucleic acid breakdown, to xanthosine 5'-monophosphate (XMP), so it can be reused for RNA or DNA synthesis. In Bacillus thuringiensis (strain Al Hakam), this protein is Xanthine phosphoribosyltransferase.